A 248-amino-acid polypeptide reads, in one-letter code: 2,3-bisphosphoglycerate-dependent phosphoglycerate mutase (248 aa).

Substrate-binding positions include 8–15, 21–22, Arg60, 87–90, Lys98, 114–115, and 183–184; these read RHGESTWN, TG, EKHY, RR, and GN. His9 (tele-phosphohistidine intermediate) is an active-site residue. Residue Glu87 is the Proton donor/acceptor of the active site.

This sequence belongs to the phosphoglycerate mutase family. BPG-dependent PGAM subfamily.

It carries out the reaction (2R)-2-phosphoglycerate = (2R)-3-phosphoglycerate. It participates in carbohydrate degradation; glycolysis; pyruvate from D-glyceraldehyde 3-phosphate: step 3/5. Catalyzes the interconversion of 2-phosphoglycerate and 3-phosphoglycerate. The protein is 2,3-bisphosphoglycerate-dependent phosphoglycerate mutase of Elusimicrobium minutum (strain Pei191).